Consider the following 396-residue polypeptide: Actin-related protein 6 (396 aa).

It belongs to the actin family. ARP6 subfamily. Interacts with CBX1 and CBX3.

The protein localises to the cytoplasm. It localises to the cytoskeleton. Its subcellular location is the nucleus. It is found in the nucleolus. Its function is as follows. Required for formation and/or maintenance of the proper nucleolar structure and function. Plays a dual role in the regulation of ribosomal DNA (rDNA) transcription. In the presence of high glucose, it maintains active rDNA transcription through H2A.Z deposition and under glucose starvation, is required for the repression of rDNA transcription, and this function may be independent of H2A.Z. This is Actin-related protein 6 (ACTR6) from Gallus gallus (Chicken).